The following is a 483-amino-acid chain: ATP synthase subunit beta (483 aa).

Residue 168 to 175 coordinates ATP; that stretch reads GGAGVGKT.

The protein belongs to the ATPase alpha/beta chains family. As to quaternary structure, F-type ATPases have 2 components, CF(1) - the catalytic core - and CF(0) - the membrane proton channel. CF(1) has five subunits: alpha(3), beta(3), gamma(1), delta(1), epsilon(1). CF(0) has three main subunits: a(1), b(2) and c(9-12). The alpha and beta chains form an alternating ring which encloses part of the gamma chain. CF(1) is attached to CF(0) by a central stalk formed by the gamma and epsilon chains, while a peripheral stalk is formed by the delta and b chains.

It is found in the cell membrane. It catalyses the reaction ATP + H2O + 4 H(+)(in) = ADP + phosphate + 5 H(+)(out). Functionally, produces ATP from ADP in the presence of a proton gradient across the membrane. The catalytic sites are hosted primarily by the beta subunits. This is ATP synthase subunit beta from Mycobacterium ulcerans (strain Agy99).